Here is a 237-residue protein sequence, read N- to C-terminus: Matrix protein (237 aa).

Residues 1–10 are compositionally biased toward low complexity; the sequence is MSSLKKILGL. Residues 1-23 form a disordered region; sequence MSSLKKILGLKGKGKKSKKLGIA. Residues 2–4 carry the dynamin binding motif; the sequence is SSL. Residues 24 to 27 carry the PPXY motif motif; that stretch reads PPPY. Residues 37–40 carry the PTAP/PSAP motif motif; that stretch reads PSAP.

The protein belongs to the vesiculoviruses matrix protein family. Homomultimer. Interacts with viral nucleocapsid; this interaction contributes to the virion assembly. Interacts with the viral envelope glycoprotein; this interaction contributes to the virion assembly. Interacts with host RAE1-NUP98 complex. Interacts with host NEDD4 and TSG101. Interacts with host dynamin. Interacts with host NDUFAF4; the interaction inhibits viral propagation and is independent of interferon activation. Interacts with host GTF2H5; the interaction may inhibit host transcription. In terms of processing, phosphorylated by host.

It is found in the virion. It localises to the host endomembrane system. Its subcellular location is the host nucleus membrane. The protein resides in the host nucleus. The protein localises to the host cytoplasm. In terms of biological role, forms a double layer around the helical nucleocapsid, the inner matrix layer binding to the N helix and the outer matrix layer binding to the envelope glycoprotein. Plays a major role in assembly and budding of virion, by recruiting cellular partners of the ESCRT complexes that play a key role in releasing the budding particle from the host membrane. Condensates the ribonucleocapsid core during virus assembly. Inhibits the host mRNA nuclear export thereby inducing the shut off of cellular transcription and preventing the interferon signaling and the establishment of antiviral state in infected cells. This shutoff presumably inhibits interferon signaling and thus establishment of antiviral state in virus infected cells. Induces cell-rounding, cytoskeleton disorganization and apoptosis in infected cell. Inhibits host transcription, possibly through interaction with host DNA repair factor IIH/TFIIH GTF2H5 subunit. This Aedes (Bovine) protein is Matrix protein (M).